The sequence spans 571 residues: MRLLFGDAAASARRPEEYEARYPRRALPKGAMVTRYAPSPTGFMHIGGIFVSLINKRLSLQSEGVFYLRLEDTDVKRAIPGALDTIVDSLARFDLSPQEGVLRAPAKDGDASSRGEFVQQGSYGPYIQTERVEIYRDYAIDLIRRGFAYPCFCTVEELDAIRQEQMALTVKPGVHGRWAKWRDAPLARVKEALAGGTPFVLRLRAPDDVSGRVEWKDGVKGVISMPVNDLDTILLKSDGIPTYHFAHAIDDHLMRTTHVIRGDEWISSMPLHLQLFRTLGFRPVEYAHVPPIQKLDRVEEVDPETGETKVSDARRKLSKRKDPEANIAYYREIGVPETGTIEYLLNIANSAFEDWRKANPDKPYSAFPLKLNKLAPGGALSDMVKLKSVSQAVVSRMSAEDVYAQGLDWAREHDKELAALMERDPEYTKRALGIERGGKKSNKRITTWPDLRPQLFFFYDELYDRVDALDFPENVPEGDRQPLLRQMLDTFDPADSKEAWFEKIRQIAVASGYAGEVKQYKASPESWKGHVGDVSMLLRVAVCGTRNSPDLTEVMAVLGEPRVRARIARFL.

A 'HIGH' region motif is present at residues 38–48 (PSPTGFMHIGG). The 'KMSKS' region signature appears at 316 to 320 (KLSKR). Residue K319 coordinates ATP.

This sequence belongs to the class-I aminoacyl-tRNA synthetase family. Glutamate--tRNA ligase type 1 subfamily. As to quaternary structure, monomer.

The protein localises to the cytoplasm. It carries out the reaction tRNA(Glu) + L-glutamate + ATP = L-glutamyl-tRNA(Glu) + AMP + diphosphate. Catalyzes the attachment of glutamate to tRNA(Glu) in a two-step reaction: glutamate is first activated by ATP to form Glu-AMP and then transferred to the acceptor end of tRNA(Glu). This Sorangium cellulosum (strain So ce56) (Polyangium cellulosum (strain So ce56)) protein is Glutamate--tRNA ligase.